Reading from the N-terminus, the 694-residue chain is Polyribonucleotide nucleotidyltransferase (694 aa).

Residues aspartate 485 and aspartate 491 each contribute to the Mg(2+) site. In terms of domain architecture, KH spans 552-611 (PRIETMQIKPNKIATVIGPGGKQIRQIIEEAGVQIDINDSGLVSISASSPQAIEKAKSII). The 69-residue stretch at 621-689 (GKIYEGRVTS…EKGQYKLSHK (69 aa)) folds into the S1 motif domain.

This sequence belongs to the polyribonucleotide nucleotidyltransferase family. Mg(2+) is required as a cofactor.

The protein resides in the cytoplasm. It catalyses the reaction RNA(n+1) + phosphate = RNA(n) + a ribonucleoside 5'-diphosphate. In terms of biological role, involved in mRNA degradation. Catalyzes the phosphorolysis of single-stranded polyribonucleotides processively in the 3'- to 5'-direction. The sequence is that of Polyribonucleotide nucleotidyltransferase from Chlamydia felis (strain Fe/C-56) (Chlamydophila felis).